Reading from the N-terminus, the 194-residue chain is Phosphoheptose isomerase (194 aa).

The SIS domain maps to 37-194 (ISNSFKQGGK…LIEFEMAKQA (158 aa)). Residue 52–54 (NGG) coordinates substrate. Residues H61 and E65 each contribute to the Zn(2+) site. Substrate contacts are provided by residues E65, 93–94 (ND), 119–121 (STS), S124, and Q172. Zn(2+)-binding residues include Q172 and H180.

It belongs to the SIS family. GmhA subfamily. Homotetramer. Zn(2+) is required as a cofactor.

It is found in the cytoplasm. It carries out the reaction 2 D-sedoheptulose 7-phosphate = D-glycero-alpha-D-manno-heptose 7-phosphate + D-glycero-beta-D-manno-heptose 7-phosphate. It functions in the pathway carbohydrate biosynthesis; D-glycero-D-manno-heptose 7-phosphate biosynthesis; D-glycero-alpha-D-manno-heptose 7-phosphate and D-glycero-beta-D-manno-heptose 7-phosphate from sedoheptulose 7-phosphate: step 1/1. Its function is as follows. Catalyzes the isomerization of sedoheptulose 7-phosphate in D-glycero-D-manno-heptose 7-phosphate. In Haemophilus influenzae (strain PittEE), this protein is Phosphoheptose isomerase.